Here is an 876-residue protein sequence, read N- to C-terminus: Alanine--tRNA ligase (876 aa).

Residues histidine 565, histidine 569, cysteine 667, and histidine 671 each contribute to the Zn(2+) site.

Belongs to the class-II aminoacyl-tRNA synthetase family. The cofactor is Zn(2+).

The protein localises to the cytoplasm. It catalyses the reaction tRNA(Ala) + L-alanine + ATP = L-alanyl-tRNA(Ala) + AMP + diphosphate. Functionally, catalyzes the attachment of alanine to tRNA(Ala) in a two-step reaction: alanine is first activated by ATP to form Ala-AMP and then transferred to the acceptor end of tRNA(Ala). Also edits incorrectly charged Ser-tRNA(Ala) and Gly-tRNA(Ala) via its editing domain. The chain is Alanine--tRNA ligase from Staphylococcus epidermidis (strain ATCC 35984 / DSM 28319 / BCRC 17069 / CCUG 31568 / BM 3577 / RP62A).